The primary structure comprises 200 residues: Small ribosomal subunit protein uS4 (200 aa).

The interval 22 to 42 (TGKELQKRPYPPGQHGPGQRR) is disordered. The S4 RNA-binding domain occupies 92 to 152 (SRLDNLVYRL…EKSRNLQVIK (61 aa)).

It belongs to the universal ribosomal protein uS4 family. As to quaternary structure, part of the 30S ribosomal subunit. Contacts protein S5. The interaction surface between S4 and S5 is involved in control of translational fidelity.

One of the primary rRNA binding proteins, it binds directly to 16S rRNA where it nucleates assembly of the body of the 30S subunit. In terms of biological role, with S5 and S12 plays an important role in translational accuracy. This Geobacillus kaustophilus (strain HTA426) protein is Small ribosomal subunit protein uS4.